The following is a 430-amino-acid chain: UDP-N-acetylglucosamine 1-carboxyvinyltransferase (430 aa).

Residue 22–23 coordinates phosphoenolpyruvate; the sequence is KN. Arginine 102 serves as a coordination point for UDP-N-acetyl-alpha-D-glucosamine. The active-site Proton donor is the cysteine 126. Cysteine 126 is subject to 2-(S-cysteinyl)pyruvic acid O-phosphothioketal. Residues 131–135, 172–175, aspartate 317, and isoleucine 339 each bind UDP-N-acetyl-alpha-D-glucosamine; these read RPVDL and KVSV.

This sequence belongs to the EPSP synthase family. MurA subfamily.

It is found in the cytoplasm. It carries out the reaction phosphoenolpyruvate + UDP-N-acetyl-alpha-D-glucosamine = UDP-N-acetyl-3-O-(1-carboxyvinyl)-alpha-D-glucosamine + phosphate. Its pathway is cell wall biogenesis; peptidoglycan biosynthesis. Functionally, cell wall formation. Adds enolpyruvyl to UDP-N-acetylglucosamine. This is UDP-N-acetylglucosamine 1-carboxyvinyltransferase from Rhizobium etli (strain ATCC 51251 / DSM 11541 / JCM 21823 / NBRC 15573 / CFN 42).